The chain runs to 280 residues: Formamidopyrimidine-DNA glycosylase (280 aa).

The active-site Schiff-base intermediate with DNA is Pro2. Glu3 serves as the catalytic Proton donor. Lys59 serves as the catalytic Proton donor; for beta-elimination activity. DNA-binding residues include His92 and Arg111. The FPG-type zinc-finger motif lies at 239–273 (NVYGQTGLPCNRCGTPIVKTKVAQRGTHYCPQCQQ). Arg263 serves as the catalytic Proton donor; for delta-elimination activity.

This sequence belongs to the FPG family. Monomer. Zn(2+) serves as cofactor.

The catalysed reaction is Hydrolysis of DNA containing ring-opened 7-methylguanine residues, releasing 2,6-diamino-4-hydroxy-5-(N-methyl)formamidopyrimidine.. It carries out the reaction 2'-deoxyribonucleotide-(2'-deoxyribose 5'-phosphate)-2'-deoxyribonucleotide-DNA = a 3'-end 2'-deoxyribonucleotide-(2,3-dehydro-2,3-deoxyribose 5'-phosphate)-DNA + a 5'-end 5'-phospho-2'-deoxyribonucleoside-DNA + H(+). Involved in base excision repair of DNA damaged by oxidation or by mutagenic agents. Acts as a DNA glycosylase that recognizes and removes damaged bases. Has a preference for oxidized purines, such as 7,8-dihydro-8-oxoguanine (8-oxoG). Has AP (apurinic/apyrimidinic) lyase activity and introduces nicks in the DNA strand. Cleaves the DNA backbone by beta-delta elimination to generate a single-strand break at the site of the removed base with both 3'- and 5'-phosphates. The chain is Formamidopyrimidine-DNA glycosylase from Enterococcus faecalis (strain ATCC 700802 / V583).